A 343-amino-acid polypeptide reads, in one-letter code: Uroporphyrinogen decarboxylase (343 aa).

Substrate contacts are provided by residues 23-27 (RQAGR), D73, Y150, S205, and H322.

It belongs to the uroporphyrinogen decarboxylase family. As to quaternary structure, homodimer.

The protein resides in the cytoplasm. It catalyses the reaction uroporphyrinogen III + 4 H(+) = coproporphyrinogen III + 4 CO2. The protein operates within porphyrin-containing compound metabolism; protoporphyrin-IX biosynthesis; coproporphyrinogen-III from 5-aminolevulinate: step 4/4. In terms of biological role, catalyzes the decarboxylation of four acetate groups of uroporphyrinogen-III to yield coproporphyrinogen-III. This is Uroporphyrinogen decarboxylase from Cereibacter sphaeroides (strain ATCC 17025 / ATH 2.4.3) (Rhodobacter sphaeroides).